The chain runs to 302 residues: uncharacterized protein (302 aa).

The active site involves glutamate 47.

Belongs to the PhzF family.

This is an uncharacterized protein from Mesorhizobium japonicum (strain LMG 29417 / CECT 9101 / MAFF 303099) (Mesorhizobium loti (strain MAFF 303099)).